The chain runs to 818 residues: SIT4-associating protein SAP4 (818 aa).

Disordered regions lie at residues 33 to 60 and 499 to 526; these read ETSS…RDRS and TSNT…KNIK. The span at 509–518 shows a compositional bias: low complexity; it reads NNDSNDSNDN.

It belongs to the SAPS family. In terms of processing, hyperphosphorylated in the absence of SIT4.

In terms of biological role, associates with the SIT4 phosphatase in a cell cycle dependent manner. May be directly or indirectly involved in SIT4-dependent functions in budding and in normal G1 cyclin expression. This is SIT4-associating protein SAP4 (SAP4) from Saccharomyces cerevisiae (strain ATCC 204508 / S288c) (Baker's yeast).